The following is a 410-amino-acid chain: Transcription factor SPN1 (410 aa).

A disordered region spans residues 1-132 (MSTADQEQPK…SRQELEEKLD (132 aa)). Residue Thr15 is modified to Phosphothreonine. A compositionally biased stretch (polar residues) spans 20-52 (TASSQKSTINAENENTKQNQSMEPQETSKGTSN). Residue Ser23 is modified to Phosphoserine; by ATM or ATR. Residue Ser40 is modified to Phosphoserine. Over residues 53 to 65 (DTKDPDNGEKNEE) the composition is skewed to basic and acidic residues. Position 85 is a phosphoserine (Ser85). Thr86 bears the Phosphothreonine mark. At Ser89 the chain carries Phosphoserine. The TFIIS N-terminal domain maps to 219–296 (QSVRIWLEPL…AEWTRPIIGA (78 aa)). The segment at 318–346 (KSVMDSAKNRKKKSKSGEDPTSRGSSVQT) is disordered.

The protein belongs to the IWS1 family. As to quaternary structure, interacts with ABD1, RBP1, SPT5 and SPT6.

The protein resides in the nucleus. Its function is as follows. Transcription factor involved in RNA polymerase II transcription regulation. May function in both SPT15/TBP post-recruitment and recruitment steps of transcription. The chain is Transcription factor SPN1 (SPN1) from Saccharomyces cerevisiae (strain ATCC 204508 / S288c) (Baker's yeast).